The chain runs to 85 residues: Putative membrane protein insertion efficiency factor (85 aa).

The protein belongs to the UPF0161 family.

The protein localises to the cell inner membrane. Functionally, could be involved in insertion of integral membrane proteins into the membrane. The chain is Putative membrane protein insertion efficiency factor from Phenylobacterium zucineum (strain HLK1).